The primary structure comprises 954 residues: DNA repair and telomere maintenance protein NBS1 (954 aa).

Residues 22-85 form the FHA domain; sequence YLFGRTVAEA…KGTLVNGVQI (64 aa). 2 BRCT domains span residues 107-186 and 244-349; these read TLKI…NAIV and GYTF…LEAI. The segment covering 368–377 has biased composition (polar residues); that stretch reads VSVSASVEPQ. 5 disordered regions span residues 368–431, 444–506, 528–580, 630–654, and 692–954; these read VSVS…FKGF, QAQS…PLPE, IEAG…KQED, VRQP…WDPR, and GIGD…GRRR. Over residues 378–393 the composition is skewed to basic and acidic residues; sequence SSEKVRPAVEDRKEVE. A compositionally biased stretch (basic residues) spans 416–428; it reads PHRRERRTGRSRF. The segment covering 458 to 471 has biased composition (polar residues); sequence PSASQDSLFVSQRE. Positions 541-554 are enriched in acidic residues; sequence PEPEREDEDVEMVE. 2 stretches are compositionally biased toward basic and acidic residues: residues 640 to 654 and 704 to 715; these read RTRE…WDPR and GRVPRRPKETQT. A compositionally biased stretch (low complexity) spans 726 to 737; that stretch reads DGSGFAAAAASG. Positions 738-751 are enriched in basic and acidic residues; it reads KGKEKDKENEKEVG. 2 stretches are compositionally biased toward low complexity: residues 801–815 and 826–842; these read EVVS…ASEP and RANA…SQTQ. Over residues 936 to 945 the composition is skewed to acidic residues; it reads GSEEESEDDE.

This sequence belongs to the Nibrin family. In terms of assembly, component of the MRN complex composed of two heterodimers RAD50 and MRE11 associated with a single NBS1.

The protein localises to the nucleus. The protein resides in the chromosome. In terms of biological role, component of the MRN complex, which plays a central role in double-strand break (DSB) repair, DNA recombination, maintenance of telomere integrity and meiosis. The MRN complex is involved in the repair of DNA double-strand breaks (DSBs) via homologous recombination (HR), an error-free mechanism which primarily occurs during S and G2 phases. The complex (1) mediates the end resection of damaged DNA, which generates proper single-stranded DNA, a key initial steps in HR, and is (2) required for the recruitment of other repair factors and efficient activation of ATM and ATR upon DNA damage. The MRN complex possesses single-strand endonuclease activity and double-strand-specific 3'-5' exonuclease activity, which are provided by MRE11, to initiate end resection, which is required for single-strand invasion and recombination. Within the MRN complex, NBS1 acts as a protein-protein adapter, which specifically recognizes and binds phosphorylated proteins, promoting their recruitment to DNA damage sites. Recruits MRE11 and RAD50 components of the MRN complex to DSBs in response to DNA damage. This is DNA repair and telomere maintenance protein NBS1 from Chaetomium thermophilum (strain DSM 1495 / CBS 144.50 / IMI 039719) (Thermochaetoides thermophila).